The primary structure comprises 200 residues: MIVGVLALQGGVEEHLTALEALGATTRKVRVPKDLDGLEGIVIPGGESTVLDKLARTFDVVEPLANLIRDGLPVFATCAGLIYLAKHLDNPARGQQTLAVVDVVVRRNAFGAQRESFDTTVDVSFDGATFPGVQASFIRAPIVTAFGPTVEAIAALNGGEVVGVRQGNIIALSFHPEETGDYRIHQAWLDLVRKHAELAI.

46–48 (GES) lines the L-glutamine pocket. C78 serves as the catalytic Nucleophile. Residues R107 and 138 to 139 (IR) each bind L-glutamine. Active-site charge relay system residues include H175 and E177.

The protein belongs to the glutaminase PdxT/SNO family. In the presence of PdxS, forms a dodecamer of heterodimers. Only shows activity in the heterodimer.

The enzyme catalyses aldehydo-D-ribose 5-phosphate + D-glyceraldehyde 3-phosphate + L-glutamine = pyridoxal 5'-phosphate + L-glutamate + phosphate + 3 H2O + H(+). It carries out the reaction L-glutamine + H2O = L-glutamate + NH4(+). Its pathway is cofactor biosynthesis; pyridoxal 5'-phosphate biosynthesis. In terms of biological role, catalyzes the hydrolysis of glutamine to glutamate and ammonia as part of the biosynthesis of pyridoxal 5'-phosphate. The resulting ammonia molecule is channeled to the active site of PdxS. The sequence is that of Pyridoxal 5'-phosphate synthase subunit PdxT from Corynebacterium glutamicum (strain ATCC 13032 / DSM 20300 / JCM 1318 / BCRC 11384 / CCUG 27702 / LMG 3730 / NBRC 12168 / NCIMB 10025 / NRRL B-2784 / 534).